The chain runs to 38 residues: Photosystem II reaction center protein L (38 aa).

The helical transmembrane segment at 17 to 37 (SLYWGLLLIFVLAILFSNYFF) threads the bilayer.

Belongs to the PsbL family. PSII is composed of 1 copy each of membrane proteins PsbA, PsbB, PsbC, PsbD, PsbE, PsbF, PsbH, PsbI, PsbJ, PsbK, PsbL, PsbM, PsbT, PsbX, PsbY, PsbZ, Psb30/Ycf12, at least 3 peripheral proteins of the oxygen-evolving complex and a large number of cofactors. It forms dimeric complexes.

The protein localises to the plastid. Its subcellular location is the chloroplast thylakoid membrane. Functionally, one of the components of the core complex of photosystem II (PSII). PSII is a light-driven water:plastoquinone oxidoreductase that uses light energy to abstract electrons from H(2)O, generating O(2) and a proton gradient subsequently used for ATP formation. It consists of a core antenna complex that captures photons, and an electron transfer chain that converts photonic excitation into a charge separation. This subunit is found at the monomer-monomer interface and is required for correct PSII assembly and/or dimerization. In Aethionema cordifolium (Lebanon stonecress), this protein is Photosystem II reaction center protein L.